Reading from the N-terminus, the 233-residue chain is Probable chemoreceptor glutamine deamidase CheD (233 aa).

The protein belongs to the CheD family.

It carries out the reaction L-glutaminyl-[protein] + H2O = L-glutamyl-[protein] + NH4(+). Functionally, probably deamidates glutamine residues to glutamate on methyl-accepting chemotaxis receptors (MCPs), playing an important role in chemotaxis. This is Probable chemoreceptor glutamine deamidase CheD from Ralstonia nicotianae (strain ATCC BAA-1114 / GMI1000) (Ralstonia solanacearum).